The following is a 373-amino-acid chain: MPRVSTHLVKLAAAALCALLLSAVAASATSRIKDLANIEGIRQNQLIGYGLVVGLNGTGDTLNNIPFTKQSLQAMLERMGVNIRGATIRTGNVAAVMVTGNLPPFATQGTRMDVTVSALGDAKNLQGGTLLVTPLLGADGNVYAVAQGSLAIGGFQAEGEAAKITRGVPTVGRIANGAIIEREIEFALNRLPNVRLALRNADFTTAKRIAAAVNDYLGTKCAEPLDPSTVQLSIPGEFKGNAVALLTEIEQLQVEPDQAAKIVIDERSGIIVMGRDVRVATVAVAQGNLTVSISESPQVSQPNPLGGGRTVVTPNSRIGVTEDGKKLAVVKDGVSLQQLVDGLNSLGIGPRDLIGILQAIKAAGAIEADIEVM.

Positions 1-28 (MPRVSTHLVKLAAAALCALLLSAVAASA) are cleaved as a signal peptide.

Belongs to the FlgI family. The basal body constitutes a major portion of the flagellar organelle and consists of four rings (L,P,S, and M) mounted on a central rod.

Its subcellular location is the periplasm. It is found in the bacterial flagellum basal body. In terms of biological role, assembles around the rod to form the L-ring and probably protects the motor/basal body from shearing forces during rotation. In Rhodopseudomonas palustris (strain ATCC BAA-98 / CGA009), this protein is Flagellar P-ring protein.